Reading from the N-terminus, the 138-residue chain is Phosphoribosyl-AMP cyclohydrolase (138 aa).

The interval 1–23 is disordered; sequence MSEQSAPSPTPAAELSSDPASPL. Aspartate 100 is a Mg(2+) binding site. Zn(2+) is bound at residue cysteine 101. Mg(2+)-binding residues include aspartate 102 and aspartate 104. The Zn(2+) site is built by cysteine 117 and cysteine 124.

This sequence belongs to the PRA-CH family. As to quaternary structure, homodimer. The cofactor is Mg(2+). It depends on Zn(2+) as a cofactor.

The protein resides in the cytoplasm. It catalyses the reaction 1-(5-phospho-beta-D-ribosyl)-5'-AMP + H2O = 1-(5-phospho-beta-D-ribosyl)-5-[(5-phospho-beta-D-ribosylamino)methylideneamino]imidazole-4-carboxamide. The protein operates within amino-acid biosynthesis; L-histidine biosynthesis; L-histidine from 5-phospho-alpha-D-ribose 1-diphosphate: step 3/9. Catalyzes the hydrolysis of the adenine ring of phosphoribosyl-AMP. In Paenarthrobacter aurescens (strain TC1), this protein is Phosphoribosyl-AMP cyclohydrolase.